The chain runs to 493 residues: GTPase Der (493 aa).

The EngA-type G 1 domain maps to 3–166 (PVIALVGRPN…EALGIFPKDN (164 aa)). GTP-binding positions include 9 to 16 (GRPNVGKS), 56 to 60 (DTGGI), and 118 to 121 (NKVD). Positions 166–195 (NAEEEGEGEPASEEVAEGEEPTRIPGPSEK) are disordered. A compositionally biased stretch (acidic residues) spans 167 to 184 (AEEEGEGEPASEEVAEGE). The region spanning 198-371 (IKIAIIGRPN…SVQESFRSAV (174 aa)) is the EngA-type G 2 domain. GTP is bound by residues 204–211 (GRPNVGKS), 251–255 (DTAGV), and 316–319 (NKWD). In terms of domain architecture, KH-like spans 372–456 (TRWPTSRLTS…PIRIEYKGGE (85 aa)). The span at 454 to 463 (GGENPYEGKK) shows a compositional bias: basic and acidic residues. The interval 454-493 (GGENPYEGKKNSLTARQVNKKRRLMSHHKKAEKKKKDKRR) is disordered. Residues 471–493 (VNKKRRLMSHHKKAEKKKKDKRR) show a composition bias toward basic residues.

Belongs to the TRAFAC class TrmE-Era-EngA-EngB-Septin-like GTPase superfamily. EngA (Der) GTPase family. Associates with the 50S ribosomal subunit.

In terms of biological role, GTPase that plays an essential role in the late steps of ribosome biogenesis. The sequence is that of GTPase Der from Pseudomonas aeruginosa (strain UCBPP-PA14).